We begin with the raw amino-acid sequence, 167 residues long: Endoribonuclease YbeY (167 aa).

Zn(2+) contacts are provided by His131, His135, and His141.

Belongs to the endoribonuclease YbeY family. It depends on Zn(2+) as a cofactor.

Its subcellular location is the cytoplasm. Its function is as follows. Single strand-specific metallo-endoribonuclease involved in late-stage 70S ribosome quality control and in maturation of the 3' terminus of the 16S rRNA. In Rickettsia rickettsii (strain Iowa), this protein is Endoribonuclease YbeY.